The sequence spans 235 residues: MVHIISKKTVSFIGQKLAAQIDEQLFTKYGFKVEQLMELAGLAAAQAIAAHYPKSNVAVLCGPGNNGGDGFVCARHLQQFGFTPSIVYPKESRNELMKSLVVQCETSSIPITATLPTNLQAFPLIVDALFGFSFHPPTREPFTEMLKTVRASGIHVFSIDVPSGWDVELGAPSGNDDDVIHPHSVISLTLPKLCMKNWTGPHFLGGRFVPKSLVDEHELLMPQYPGFEQIVKLED.

The 204-residue stretch at 18 to 221 (AAQIDEQLFT…SLVDEHELLM (204 aa)) folds into the YjeF N-terminal domain. A (6S)-NADPHX-binding site is contributed by 65–69 (NNGGD). K(+)-binding residues include N66 and D127. (6S)-NADPHX is bound by residues 131–137 (GFSFHPP) and D160. S163 serves as a coordination point for K(+).

It belongs to the NnrE/AIBP family. Requires K(+) as cofactor.

It carries out the reaction (6R)-NADHX = (6S)-NADHX. It catalyses the reaction (6R)-NADPHX = (6S)-NADPHX. Functionally, catalyzes the epimerization of the S- and R-forms of NAD(P)HX, a damaged form of NAD(P)H that is a result of enzymatic or heat-dependent hydration. This is a prerequisite for the S-specific NAD(P)H-hydrate dehydratase to allow the repair of both epimers of NAD(P)HX. This Caenorhabditis elegans protein is NAD(P)H-hydrate epimerase.